We begin with the raw amino-acid sequence, 527 residues long: Bifunctional methyltransferase (527 aa).

The hemK stretch occupies residues 1–309 (MQYSIKQVLS…GHSRVILFSP (309 aa)). The tract at residues 1–311 (MQYSIKQVLS…SRVILFSPIN (311 aa)) is RF MTase. Residues 149–153 (GTGSG), D172, W201, N216, E356, E381, N408, and D430 contribute to the S-adenosyl-L-methionine site. 216 to 219 (NPPY) provides a ligand contact to substrate. Residues 310–527 (INLNRSYARR…IILQHVSGDH (218 aa)) form a tRNA (guanine-N(7)-)-methyltransferase region. Residues 314 to 527 (RSYARRIGKS…IILQHVSGDH (214 aa)) are tRNA MTase. The active site involves D430. The substrate site is built by K434 and D466.

The protein in the C-terminal section; belongs to the class I-like SAM-binding methyltransferase superfamily. TrmB family. It in the N-terminal section; belongs to the protein N5-glutamine methyltransferase family. PrmC subfamily.

The enzyme catalyses L-glutaminyl-[peptide chain release factor] + S-adenosyl-L-methionine = N(5)-methyl-L-glutaminyl-[peptide chain release factor] + S-adenosyl-L-homocysteine + H(+). It carries out the reaction guanosine(46) in tRNA + S-adenosyl-L-methionine = N(7)-methylguanosine(46) in tRNA + S-adenosyl-L-homocysteine. Its function is as follows. Methylates the class 1 translation termination release factors RF1/PrfA and RF2/PrfB on the glutamine residue of the universally conserved GGQ motif. Catalyzes the formation of N(7)-methylguanine at position 46 (m7G46) in tRNA. This is Bifunctional methyltransferase (prmC/trmB) from Rickettsia felis (strain ATCC VR-1525 / URRWXCal2) (Rickettsia azadi).